The chain runs to 377 residues: MQKDAQRRPDSDDALALITRGVTLIDVRAPVEFAQGAMPGAINLPLMNNDERAAVGTCYKQHGQQAALALGHRLVYGEVREARLNAWRLACERHPEGFLCCARGGMRSYIVQQWLRERGIDYPLVEGGYKRLRQEAMDATDRLSRLPMVLIGGCTGSGKTQLVKALPTGIDLEGLAHHRGSSFGRTLTPQRAQASFENHLAAAMLNHHARWTTLSNPFWVLEDEGKMIGANHLPAVLREQMLQAPVAVVEEPLERRLERLREEYFVQMQAAFQAALGDEAAGWRAYGDYLHHGLYAIRRRLGLARYAELAALQEAALARQQRTGETHAHFAWLAPLLEGYYDPMYRYQLEKKAQQIAFRGDYHQVDAWLRHRYCASR.

The 124-residue stretch at 18 to 141 (ITRGVTLIDV…LRQEAMDATD (124 aa)) folds into the Rhodanese domain. Catalysis depends on C101, which acts as the S-selanylcysteine intermediate.

This sequence belongs to the SelU family. Monomer.

It carries out the reaction 5-methylaminomethyl-2-thiouridine(34) in tRNA + selenophosphate + (2E)-geranyl diphosphate + H2O + H(+) = 5-methylaminomethyl-2-selenouridine(34) in tRNA + (2E)-thiogeraniol + phosphate + diphosphate. The catalysed reaction is 5-methylaminomethyl-2-thiouridine(34) in tRNA + (2E)-geranyl diphosphate = 5-methylaminomethyl-S-(2E)-geranyl-thiouridine(34) in tRNA + diphosphate. It catalyses the reaction 5-methylaminomethyl-S-(2E)-geranyl-thiouridine(34) in tRNA + selenophosphate + H(+) = 5-methylaminomethyl-2-(Se-phospho)selenouridine(34) in tRNA + (2E)-thiogeraniol. The enzyme catalyses 5-methylaminomethyl-2-(Se-phospho)selenouridine(34) in tRNA + H2O = 5-methylaminomethyl-2-selenouridine(34) in tRNA + phosphate. In terms of biological role, involved in the post-transcriptional modification of the uridine at the wobble position (U34) of tRNA(Lys), tRNA(Glu) and tRNA(Gln). Catalyzes the conversion of 2-thiouridine (S2U-RNA) to 2-selenouridine (Se2U-RNA). Acts in a two-step process involving geranylation of 2-thiouridine (S2U) to S-geranyl-2-thiouridine (geS2U) and subsequent selenation of the latter derivative to 2-selenouridine (Se2U) in the tRNA chain. This Cronobacter sakazakii (strain ATCC BAA-894) (Enterobacter sakazakii) protein is tRNA 2-selenouridine synthase.